A 394-amino-acid polypeptide reads, in one-letter code: Acetyl-CoA acetyltransferase (394 aa).

C89 acts as the Acyl-thioester intermediate in catalysis. Active-site proton acceptor residues include H350 and C380.

The protein belongs to the thiolase-like superfamily. Thiolase family. As to quaternary structure, homotetramer.

It localises to the cytoplasm. The catalysed reaction is 2 acetyl-CoA = acetoacetyl-CoA + CoA. Its pathway is biopolymer metabolism; poly-(R)-3-hydroxybutanoate biosynthesis. It functions in the pathway metabolic intermediate biosynthesis; (R)-mevalonate biosynthesis; (R)-mevalonate from acetyl-CoA: step 1/3. The chain is Acetyl-CoA acetyltransferase from Allochromatium vinosum (strain ATCC 17899 / DSM 180 / NBRC 103801 / NCIMB 10441 / D) (Chromatium vinosum).